A 423-amino-acid chain; its full sequence is Glycine amidinotransferase, mitochondrial (423 aa).

The N-terminal 43 residues, 1–43, are a transit peptide targeting the mitochondrion; that stretch reads MLRVRCLRGGSRGAEALHYIGSRLGRTVTGWVQRTFQSTQAAT. Serine 46 and serine 49 each carry phosphoserine. Aspartate 170 is a binding site for arginine. Residues aspartate 254 and histidine 303 contribute to the active site. Arginine contacts are provided by aspartate 305, arginine 322, serine 354, and serine 355. Lysine 385 carries the post-translational modification N6-acetyllysine. Cysteine 407 (amidino-cysteine intermediate) is an active-site residue.

It belongs to the amidinotransferase family. In terms of assembly, homodimer.

Its subcellular location is the mitochondrion inner membrane. It catalyses the reaction L-arginine + glycine = guanidinoacetate + L-ornithine. The catalysed reaction is 4-aminobutanoate + L-arginine = 4-guanidinobutanoate + L-ornithine. The enzyme catalyses beta-alanine + L-arginine = 3-guanidinopropanoate + L-ornithine. It carries out the reaction taurine + L-arginine = taurocyamine + L-ornithine. It participates in amine and polyamine biosynthesis; creatine biosynthesis; creatine from L-arginine and glycine: step 1/2. Its function is as follows. Transamidinase that catalyzes the transfer of the amidino group of L-arginine onto the amino moiety of acceptor metabolites such as glycine, beta-alanine, gamma-aminobutyric acid (GABA) and taurine yielding the corresponding guanidine derivatives. Catalyzes the rate-limiting step of creatine biosynthesis, namely the transfer of the amidino group from L-arginine to glycine to generate guanidinoacetate, which is then methylated by GAMT to form creatine. Provides creatine as a source for ATP generation in tissues with high energy demands, in particular skeletal muscle, heart and brain. The sequence is that of Glycine amidinotransferase, mitochondrial (GATM) from Bos taurus (Bovine).